Consider the following 164-residue polypeptide: Transcriptional repressor NrdR (164 aa).

A zinc finger lies at 3–34; the sequence is CPKCNYHKSSVVDSRQAEDGNTIRRRRECEQC. One can recognise an ATP-cone domain in the interval 49–139; that stretch reads LLVIKKDGTR…VYKSFKDVDE (91 aa).

This sequence belongs to the NrdR family. Zn(2+) serves as cofactor.

Its function is as follows. Negatively regulates transcription of bacterial ribonucleotide reductase nrd genes and operons by binding to NrdR-boxes. This is Transcriptional repressor NrdR from Streptococcus pyogenes serotype M6 (strain ATCC BAA-946 / MGAS10394).